Reading from the N-terminus, the 430-residue chain is Isocitrate dehydrogenase [NADP], mitochondrial (430 aa).

A mitochondrion-targeting transit peptide spans 1-27 (MIRASAIQRTAMLLRQLRGFSTSATLA). NADP(+)-binding positions include 101–103 (TIT) and arginine 108. Threonine 103 is a substrate binding site. Residues 120-126 (SPNGTIR), arginine 135, and arginine 158 contribute to the substrate site. Aspartate 277 contributes to the Mn(2+) binding site. Lysine 285 is a binding site for NADP(+). A Mn(2+)-binding site is contributed by aspartate 300. Residues 335–340 (GTVTRH) and asparagine 353 each bind NADP(+).

This sequence belongs to the isocitrate and isopropylmalate dehydrogenases family. As to quaternary structure, homodimer. Requires Mg(2+) as cofactor. Mn(2+) serves as cofactor.

It localises to the mitochondrion. The catalysed reaction is D-threo-isocitrate + NADP(+) = 2-oxoglutarate + CO2 + NADPH. Functionally, mitochondrial IDP1 may regulate flux through the tricarboxylic acid cycle and respiration. Its probably critical function is the production of NADPH. This chain is Isocitrate dehydrogenase [NADP], mitochondrial (IDP1), found in Candida tropicalis (Yeast).